A 172-amino-acid chain; its full sequence is 3-hydroxydecanoyl-[acyl-carrier-protein] dehydratase (172 aa).

H71 is an active-site residue.

This sequence belongs to the thioester dehydratase family. FabA subfamily. In terms of assembly, homodimer.

It localises to the cytoplasm. It catalyses the reaction a (3R)-hydroxyacyl-[ACP] = a (2E)-enoyl-[ACP] + H2O. The enzyme catalyses (3R)-hydroxydecanoyl-[ACP] = (2E)-decenoyl-[ACP] + H2O. It carries out the reaction (2E)-decenoyl-[ACP] = (3Z)-decenoyl-[ACP]. The protein operates within lipid metabolism; fatty acid biosynthesis. Its function is as follows. Necessary for the introduction of cis unsaturation into fatty acids. Catalyzes the dehydration of (3R)-3-hydroxydecanoyl-ACP to E-(2)-decenoyl-ACP and then its isomerization to Z-(3)-decenoyl-ACP. Can catalyze the dehydratase reaction for beta-hydroxyacyl-ACPs with saturated chain lengths up to 16:0, being most active on intermediate chain length. The chain is 3-hydroxydecanoyl-[acyl-carrier-protein] dehydratase from Salmonella agona (strain SL483).